The following is a 342-amino-acid chain: GTPase Obg (342 aa).

In terms of domain architecture, Obg spans 1–159 (MKFIDEAKIY…RWIRLELKLL (159 aa)). The OBG-type G domain maps to 160 to 332 (ADVGIIGLPN…LLYKIGEALK (173 aa)). Residues 166 to 173 (GLPNVGKS), 191 to 195 (FTTLT), 214 to 217 (DIPG), 284 to 287 (NKTD), and 313 to 315 (SAA) contribute to the GTP site. Mg(2+) is bound by residues Ser173 and Thr193.

Belongs to the TRAFAC class OBG-HflX-like GTPase superfamily. OBG GTPase family. Monomer. The cofactor is Mg(2+).

It localises to the cytoplasm. Its function is as follows. An essential GTPase which binds GTP, GDP and possibly (p)ppGpp with moderate affinity, with high nucleotide exchange rates and a fairly low GTP hydrolysis rate. Plays a role in control of the cell cycle, stress response, ribosome biogenesis and in those bacteria that undergo differentiation, in morphogenesis control. In Syntrophus aciditrophicus (strain SB), this protein is GTPase Obg.